A 642-amino-acid polypeptide reads, in one-letter code: 1-deoxy-D-xylulose-5-phosphate synthase 2 (642 aa).

Residues H73 and 113–115 (SHA) each bind thiamine diphosphate. Residue D144 participates in Mg(2+) binding. Thiamine diphosphate-binding positions include 145-146 (GA), N174, Y285, and E366. N174 contributes to the Mg(2+) binding site.

This sequence belongs to the transketolase family. DXPS subfamily. As to quaternary structure, homodimer. Mg(2+) is required as a cofactor. The cofactor is thiamine diphosphate.

It catalyses the reaction D-glyceraldehyde 3-phosphate + pyruvate + H(+) = 1-deoxy-D-xylulose 5-phosphate + CO2. It functions in the pathway metabolic intermediate biosynthesis; 1-deoxy-D-xylulose 5-phosphate biosynthesis; 1-deoxy-D-xylulose 5-phosphate from D-glyceraldehyde 3-phosphate and pyruvate: step 1/1. In terms of biological role, catalyzes the acyloin condensation reaction between C atoms 2 and 3 of pyruvate and glyceraldehyde 3-phosphate to yield 1-deoxy-D-xylulose-5-phosphate (DXP). The protein is 1-deoxy-D-xylulose-5-phosphate synthase 2 of Streptomyces avermitilis (strain ATCC 31267 / DSM 46492 / JCM 5070 / NBRC 14893 / NCIMB 12804 / NRRL 8165 / MA-4680).